We begin with the raw amino-acid sequence, 48 residues long: Osteocalcin (48 aa).

Residues 1 to 46 (SFAVGSSYGAAPDPLEAQREVCELNPDCDELADHIGFQEAYRRFYG) enclose the Gla domain. Ca(2+)-binding residues include Glu-16, Glu-20, Glu-23, and Asp-29. Residues Glu-16, Glu-20, and Glu-23 each carry the 4-carboxyglutamate modification. Residues Cys-22 and Cys-28 are joined by a disulfide bond.

It belongs to the osteocalcin/matrix Gla protein family. Gamma-carboxyglutamate residues are formed by vitamin K dependent carboxylation by GGCX. These residues are essential for the binding of calcium.

The protein localises to the secreted. In terms of biological role, the carboxylated form is one of the main organic components of the bone matrix, which constitutes 1-2% of the total bone protein. The carboxylated form binds strongly to apatite and calcium. The chain is Osteocalcin (BGLAP) from Dromaius novaehollandiae (Emu).